We begin with the raw amino-acid sequence, 358 residues long: Feruloyl esterase B (358 aa).

The signal sequence occupies residues 1–18 (MAIPLVLLLAWLLPTVFA). Residues 19-291 (ASLTQVSNFG…VSVVLDWFGI (273 aa)) are catalytic. Serine 136 acts as the Charge relay system in catalysis. Asparagine 179 and asparagine 246 each carry an N-linked (GlcNAc...) asparagine glycan. Residues 292 to 321 (TGGGGGNGGGSGSTTTTTSATTTSTGPTGG) form a gly/Thr-rich linker region. The segment at 297–318 (GNGGGSGSTTTTTSATTTSTGP) is disordered. The span at 304 to 318 (STTTTTSATTTSTGP) shows a compositional bias: low complexity. In terms of domain architecture, CBM1 spans 322 to 358 (CTAAHWDQCGGNGYTGCTSCASPYTCQKVNDYYSQCL).

The protein belongs to the carbohydrate esterase 1 (CE1) family. Feruloyl esterase type B subfamily.

The protein resides in the secreted. The enzyme catalyses feruloyl-polysaccharide + H2O = ferulate + polysaccharide.. In terms of biological role, involved in degradation of plant cell walls. Hydrolyzes the feruloyl-arabinose ester bond in arabinoxylans as well as the feruloyl-galactose and feruloyl-arabinose ester bonds in pectin. Active against methyl esters of caffeate (MCA), but not sinapate (MSA). This chain is Feruloyl esterase B (faeB), found in Talaromyces stipitatus (strain ATCC 10500 / CBS 375.48 / QM 6759 / NRRL 1006) (Penicillium stipitatum).